Here is a 416-residue protein sequence, read N- to C-terminus: 5-methylthioadenosine/S-adenosylhomocysteine deaminase 2 (416 aa).

Residues histidine 58 and histidine 60 each contribute to the Zn(2+) site. Substrate is bound by residues glutamate 86 and histidine 178. Residue histidine 205 participates in Zn(2+) binding. Substrate is bound by residues glutamate 208 and aspartate 293. Aspartate 293 is a binding site for Zn(2+).

The protein belongs to the metallo-dependent hydrolases superfamily. MTA/SAH deaminase family. Zn(2+) serves as cofactor.

The catalysed reaction is S-adenosyl-L-homocysteine + H2O + H(+) = S-inosyl-L-homocysteine + NH4(+). It catalyses the reaction S-methyl-5'-thioadenosine + H2O + H(+) = S-methyl-5'-thioinosine + NH4(+). Functionally, catalyzes the deamination of 5-methylthioadenosine and S-adenosyl-L-homocysteine into 5-methylthioinosine and S-inosyl-L-homocysteine, respectively. Is also able to deaminate adenosine. This is 5-methylthioadenosine/S-adenosylhomocysteine deaminase 2 from Archaeoglobus fulgidus (strain ATCC 49558 / DSM 4304 / JCM 9628 / NBRC 100126 / VC-16).